Reading from the N-terminus, the 163-residue chain is MTDFTHLDDQGRVRMVDVAGKDVTRRVAIARGRIDMTADTLDRIFGRNVKKGNVLEAARIAGVMAAKRTADLIPMCHPLNLTHVRVDFFPDPGHNRIEIEAEASLAGRTGVEMEALTAVSVAALTIYDMCKSYDKGMIISDIHLKSKTGGKSGTFLADRYGHP.

Residues 75 to 77 (MCH) and 113 to 114 (ME) each bind substrate. D128 is an active-site residue.

Belongs to the MoaC family. Homohexamer; trimer of dimers.

It catalyses the reaction (8S)-3',8-cyclo-7,8-dihydroguanosine 5'-triphosphate = cyclic pyranopterin phosphate + diphosphate. The protein operates within cofactor biosynthesis; molybdopterin biosynthesis. Its function is as follows. Catalyzes the conversion of (8S)-3',8-cyclo-7,8-dihydroguanosine 5'-triphosphate to cyclic pyranopterin monophosphate (cPMP). The sequence is that of Cyclic pyranopterin monophosphate synthase from Desulforapulum autotrophicum (strain ATCC 43914 / DSM 3382 / VKM B-1955 / HRM2) (Desulfobacterium autotrophicum).